A 176-amino-acid polypeptide reads, in one-letter code: Disulfide bond formation protein B (176 aa).

Topologically, residues M1–Q11 are cytoplasmic. A helical transmembrane segment spans residues V12–F28. Over L29–I46 the chain is Periplasmic. C38 and C41 are disulfide-bonded. A helical transmembrane segment spans residues G47–P63. The Cytoplasmic segment spans residues K64–L70. The chain crosses the membrane as a helical span at residues L71 to G88. Topologically, residues R89–E145 are periplasmic. C104 and C131 form a disulfide bridge. A helical membrane pass occupies residues Q146–R164. The Cytoplasmic segment spans residues I165–R176.

It belongs to the DsbB family.

Its subcellular location is the cell inner membrane. Functionally, required for disulfide bond formation in some periplasmic proteins. Acts by oxidizing the DsbA protein. In Psychrobacter cryohalolentis (strain ATCC BAA-1226 / DSM 17306 / VKM B-2378 / K5), this protein is Disulfide bond formation protein B.